The chain runs to 338 residues: Ribonucleoside-diphosphate reductase small subunit (338 aa).

Positions 81, 112, and 115 each coordinate Fe cation. Residue Tyr119 is part of the active site. Positions 174, 208, and 211 each coordinate Fe cation.

Belongs to the ribonucleoside diphosphate reductase small chain family. In terms of assembly, heterodimer of a large and a small subunit. Requires Fe cation as cofactor.

Its subcellular location is the cytoplasm. It carries out the reaction a 2'-deoxyribonucleoside 5'-diphosphate + [thioredoxin]-disulfide + H2O = a ribonucleoside 5'-diphosphate + [thioredoxin]-dithiol. Its function is as follows. Provides the precursors necessary for DNA synthesis. Catalyzes the biosynthesis of deoxyribonucleotides from the corresponding ribonucleotides. The chain is Ribonucleoside-diphosphate reductase small subunit (rnrB-1) from Dictyostelium discoideum (Social amoeba).